A 252-amino-acid chain; its full sequence is Imidazole glycerol phosphate synthase subunit HisF (252 aa).

Residues Asp13 and Asp132 contribute to the active site.

The protein belongs to the HisA/HisF family. Heterodimer of HisH and HisF.

The protein resides in the cytoplasm. The catalysed reaction is 5-[(5-phospho-1-deoxy-D-ribulos-1-ylimino)methylamino]-1-(5-phospho-beta-D-ribosyl)imidazole-4-carboxamide + L-glutamine = D-erythro-1-(imidazol-4-yl)glycerol 3-phosphate + 5-amino-1-(5-phospho-beta-D-ribosyl)imidazole-4-carboxamide + L-glutamate + H(+). Its pathway is amino-acid biosynthesis; L-histidine biosynthesis; L-histidine from 5-phospho-alpha-D-ribose 1-diphosphate: step 5/9. Functionally, IGPS catalyzes the conversion of PRFAR and glutamine to IGP, AICAR and glutamate. The HisF subunit catalyzes the cyclization activity that produces IGP and AICAR from PRFAR using the ammonia provided by the HisH subunit. This chain is Imidazole glycerol phosphate synthase subunit HisF, found in Campylobacter fetus subsp. fetus (strain 82-40).